We begin with the raw amino-acid sequence, 423 residues long: UDP-N-acetylglucosamine 1-carboxyvinyltransferase (423 aa).

21 to 22 provides a ligand contact to phosphoenolpyruvate; it reads KN. Arg-92 lines the UDP-N-acetyl-alpha-D-glucosamine pocket. Catalysis depends on Cys-116, which acts as the Proton donor. The residue at position 116 (Cys-116) is a 2-(S-cysteinyl)pyruvic acid O-phosphothioketal. Residues Asp-305 and Val-327 each coordinate UDP-N-acetyl-alpha-D-glucosamine.

Belongs to the EPSP synthase family. MurA subfamily.

Its subcellular location is the cytoplasm. The enzyme catalyses phosphoenolpyruvate + UDP-N-acetyl-alpha-D-glucosamine = UDP-N-acetyl-3-O-(1-carboxyvinyl)-alpha-D-glucosamine + phosphate. It participates in cell wall biogenesis; peptidoglycan biosynthesis. Cell wall formation. Adds enolpyruvyl to UDP-N-acetylglucosamine. In Fervidobacterium nodosum (strain ATCC 35602 / DSM 5306 / Rt17-B1), this protein is UDP-N-acetylglucosamine 1-carboxyvinyltransferase.